Consider the following 171-residue polypeptide: Voltage-dependent P/Q-type calcium channel subunit alpha-1A (171 aa).

A helical membrane pass occupies residues 1–11 (FVTVLGSITDI). One copy of the IV repeat lies at 1–171 (FVTVLGSITD…LMLNLFVAVI (171 aa)). Over 12–18 (LVTEFGN) the chain is Extracellular. The helical transmembrane segment at 19-37 (NFINLSFLRLFRAARLIKL) threads the bilayer. Residues 38–56 (LRQGYTIRILLWTFVQSFK) lie on the Cytoplasmic side of the membrane. A helical transmembrane segment spans residues 57–76 (ALPYVCLLIAMLFFIYAIIG). Residues 77 to 143 (MQVFGNIGIE…ENSGIKEDEC (67 aa)) are Extracellular-facing. A helical membrane pass occupies residues 144 to 168 (GNEFAYFYFVSFIFLCSFLMLNLFV). Topologically, residues 169–171 (AVI) are cytoplasmic.

The protein belongs to the calcium channel alpha-1 subunit (TC 1.A.1.11) family. CACNA1A subfamily. As to quaternary structure, voltage-dependent calcium channels are multisubunit complexes, consisting of alpha-1, alpha-2, beta and delta subunits in a 1:1:1:1 ratio. The channel activity is directed by the pore-forming and voltage-sensitive alpha-1 subunit. In many cases, this subunit is sufficient to generate voltage-sensitive calcium channel activity. The auxiliary subunits beta and alpha-2/delta linked by a disulfide bridge regulate the channel activity.

It localises to the cell membrane. The catalysed reaction is Ca(2+)(in) = Ca(2+)(out). Its function is as follows. The isoform alpha-1A gives rise to P and/or Q-type calcium currents. P/Q-type calcium channels belong to the 'high-voltage activated' (HVA) group. This chain is Voltage-dependent P/Q-type calcium channel subunit alpha-1A (CACNA1A), found in Gallus gallus (Chicken).